Here is a 359-residue protein sequence, read N- to C-terminus: Ribosome biogenesis protein BRX1 homolog (359 aa).

Over residues 1-12 the composition is skewed to basic residues; the sequence is MGRKFQNKKKKA. A disordered region spans residues 1 to 42; that stretch reads MGRKFQNKKKKAAPQLEIVPLDENPPLPPQRSSDDVVPKKAR. Positions 50–241 constitute a Brix domain; that stretch reads QRVLVFSARG…PVKIFDGSFT (192 aa).

This sequence belongs to the BRX1 family.

It is found in the nucleus. Its subcellular location is the nucleolus. Required for biogenesis of the 60S ribosomal subunit. This Drosophila melanogaster (Fruit fly) protein is Ribosome biogenesis protein BRX1 homolog.